The chain runs to 497 residues: Aspartyl/glutamyl-tRNA(Asn/Gln) amidotransferase subunit B (497 aa).

Belongs to the GatB/GatE family. GatB subfamily. In terms of assembly, heterotrimer of A, B and C subunits.

It catalyses the reaction L-glutamyl-tRNA(Gln) + L-glutamine + ATP + H2O = L-glutaminyl-tRNA(Gln) + L-glutamate + ADP + phosphate + H(+). The enzyme catalyses L-aspartyl-tRNA(Asn) + L-glutamine + ATP + H2O = L-asparaginyl-tRNA(Asn) + L-glutamate + ADP + phosphate + 2 H(+). Allows the formation of correctly charged Asn-tRNA(Asn) or Gln-tRNA(Gln) through the transamidation of misacylated Asp-tRNA(Asn) or Glu-tRNA(Gln) in organisms which lack either or both of asparaginyl-tRNA or glutaminyl-tRNA synthetases. The reaction takes place in the presence of glutamine and ATP through an activated phospho-Asp-tRNA(Asn) or phospho-Glu-tRNA(Gln). This is Aspartyl/glutamyl-tRNA(Asn/Gln) amidotransferase subunit B from Novosphingobium aromaticivorans (strain ATCC 700278 / DSM 12444 / CCUG 56034 / CIP 105152 / NBRC 16084 / F199).